An 873-amino-acid polypeptide reads, in one-letter code: Paramyosin (873 aa).

Residues 1 to 25 form a nonhelical region region; that stretch reads MSSRSSKYMYKSSGGAGDISIEYGT. A coiled-coil region spans residues 26 to 852; the sequence is DLGALTRLED…IRAKHRSWVT (827 aa). The segment at 853–873 is nonhelical region; it reads TSQVPGGTRQVFVTEESSQNF.

Belongs to the paramyosin family. Homodimer. Binds IgG and collagen. Expressed in all tissues except in saliva.

It is found in the cytoplasm. The protein localises to the myofibril. In terms of biological role, paramyosin is a major structural component of many thick filaments isolated from invertebrate muscles. The chain is Paramyosin (PRM) from Rhipicephalus microplus (Cattle tick).